We begin with the raw amino-acid sequence, 179 residues long: uncharacterized protein (179 aa).

This is an uncharacterized protein from Escherichia coli (strain K12).